Consider the following 1167-residue polypeptide: Melanoma receptor tyrosine-protein kinase (1167 aa).

Residues 1 to 25 (MEFLRGGAALLQLLLVLSISRCCST) form the signal peptide. Residues 26–642 (DPDRKVCQGT…GCRGDIVSHS (617 aa)) lie on the Extracellular side of the membrane. N-linked (GlcNAc...) asparagine glycans are attached at residues Asn-114, Asn-144, and Asn-201. 11 disulfide bridges follow: Cys-195–Cys-204, Cys-199–Cys-212, Cys-220–Cys-228, Cys-224–Cys-236, Cys-237–Cys-245, Cys-241–Cys-253, Cys-256–Cys-265, Cys-269–Cys-296, Cys-300–Cys-311, Cys-315–Cys-330, and Cys-333–Cys-337. 5 N-linked (GlcNAc...) asparagine glycosylation sites follow: Asn-356, Asn-365, Asn-398, Asn-417, and Asn-501. 9 cysteine pairs are disulfide-bonded: Cys-504–Cys-513, Cys-508–Cys-521, Cys-524–Cys-533, Cys-537–Cys-553, Cys-556–Cys-569, Cys-560–Cys-577, Cys-593–Cys-615, Cys-618–Cys-626, and Cys-622–Cys-634. A glycan (N-linked (GlcNAc...) asparagine) is linked at Asn-576. Asn-621 carries an N-linked (GlcNAc...) asparagine glycan. A helical transmembrane segment spans residues 643–665 (SLAVGLVSGLLITVIVALLIVVL). The Cytoplasmic portion of the chain corresponds to 666 to 1167 (LRRRRIKRKR…QGGALYTPVR (502 aa)). Residues 710–977 (FKKDRVLGSG…QMARDPSRYL (268 aa)) form the Protein kinase domain. ATP is bound by residues 716 to 724 (LGSGAFGTV) and Lys-743. Catalysis depends on Asp-835, which acts as the Proton acceptor.

This sequence belongs to the protein kinase superfamily. Tyr protein kinase family. EGF receptor subfamily.

It is found in the membrane. It carries out the reaction L-tyrosyl-[protein] + ATP = O-phospho-L-tyrosyl-[protein] + ADP + H(+). Functionally, probable receptor with tyrosine-protein kinase activity. The protein is Melanoma receptor tyrosine-protein kinase (xmrk) of Xiphophorus maculatus (Southern platyfish).